The chain runs to 303 residues: uncharacterized protein (303 aa).

Transmembrane regions (helical) follow at residues 12 to 32 (GLPIGSPMYAHLLAGAFSGIL), 81 to 101 (ISSVIMGAGPSHAIYFSVLEF), 117 to 137 (ALAGACAITISDAFMTPFDVI), 174 to 194 (CIAMSIPFTAIQVATYDTCMS), 208 to 228 (IISGGLSGAIASSLTTPLDVV), and 265 to 286 (FFKGIRPRMVVAMPATAVSWAA). 3 Solcar repeats span residues 17–105 (SPMY…FKSK), 111–195 (DRPL…CMSF), and 206–293 (SHII…GKEI).

This sequence belongs to the mitochondrial carrier (TC 2.A.29) family.

It localises to the mitochondrion inner membrane. This is an uncharacterized protein from Schizosaccharomyces pombe (strain 972 / ATCC 24843) (Fission yeast).